A 418-amino-acid chain; its full sequence is Serine hydroxymethyltransferase (418 aa).

(6S)-5,6,7,8-tetrahydrofolate contacts are provided by residues Leu-121 and 125-127 (GHL). Residue Lys-230 is modified to N6-(pyridoxal phosphate)lysine. Residues Glu-246 and 355–357 (SPF) each bind (6S)-5,6,7,8-tetrahydrofolate.

This sequence belongs to the SHMT family. In terms of assembly, homodimer. Pyridoxal 5'-phosphate serves as cofactor.

The protein localises to the cytoplasm. It carries out the reaction (6R)-5,10-methylene-5,6,7,8-tetrahydrofolate + glycine + H2O = (6S)-5,6,7,8-tetrahydrofolate + L-serine. Its pathway is one-carbon metabolism; tetrahydrofolate interconversion. The protein operates within amino-acid biosynthesis; glycine biosynthesis; glycine from L-serine: step 1/1. In terms of biological role, catalyzes the reversible interconversion of serine and glycine with tetrahydrofolate (THF) serving as the one-carbon carrier. This reaction serves as the major source of one-carbon groups required for the biosynthesis of purines, thymidylate, methionine, and other important biomolecules. Also exhibits THF-independent aldolase activity toward beta-hydroxyamino acids, producing glycine and aldehydes, via a retro-aldol mechanism. The chain is Serine hydroxymethyltransferase from Streptococcus pneumoniae (strain Taiwan19F-14).